A 700-amino-acid chain; its full sequence is MARTTPISLYRNIGISAHIDAGKTTTTERILFYTGVSHKIGEVHDGAATMDWMEQEQERGITITSAATTAFWSGMSQQFPQHRINVIDTPGHVDFTIEVERSMRVLDGAVMVYCAVGGVQPQSETVWRQANKYKVPRIAFVNKMDRTGANFLRVVEQIKTRLGGNAVPLQLPIGAEDNFKGVVDLIKMKAINWNEADQGMTFTYEDIPAEMLAECEKWRANLVEAAAESSDELMDKFFSGDELTEEEIKKGLRLRALKTEIILVTCGSAFKNKGVQAMLDAVIDYLPAPTDIEAIKGINPDETEGERHASDDEPFAALAFKIATDPFVGNLTFFRVYSGVVESGATVLNSVKDKRERFGRIVQMHANKREEIKEVRAGDIAAAIGLKDVGTGDTLCAMDAPIILERMEFPEPVISVAVEPKTKADQEKMGLALGRLAQEDPSFRVHTDEESGETIISGMGELHLDIIVDRMRREFKVEANIGKPQVSYRETIRTRVNDVEGKHAKQSGGRGQYGHVVIDLYPLEPEGPGYEFVNEIKGGVIPGEYIPAVDKGIQEQLKSGPLAGYPVVDLGVRLHFGSYHDVDSSELAFKLAASLAFKAAFNKANPVLLEPIMKVEVETPPDYVGDVIGDLSRRRAMVSGQEANEFVVKINAEVPLAEMFGYATDLRSQTQGRASYSMEPLKYAEAPKNVADAVIEARKK.

The region spanning 8 to 290 (SLYRNIGISA…AVIDYLPAPT (283 aa)) is the tr-type G domain. Residues 17–24 (AHIDAGKT), 88–92 (DTPGH), and 142–145 (NKMD) each bind GTP.

This sequence belongs to the TRAFAC class translation factor GTPase superfamily. Classic translation factor GTPase family. EF-G/EF-2 subfamily.

It is found in the cytoplasm. Functionally, catalyzes the GTP-dependent ribosomal translocation step during translation elongation. During this step, the ribosome changes from the pre-translocational (PRE) to the post-translocational (POST) state as the newly formed A-site-bound peptidyl-tRNA and P-site-bound deacylated tRNA move to the P and E sites, respectively. Catalyzes the coordinated movement of the two tRNA molecules, the mRNA and conformational changes in the ribosome. This is Elongation factor G from Histophilus somni (strain 129Pt) (Haemophilus somnus).